A 310-amino-acid chain; its full sequence is Pantothenate kinase (310 aa).

95-102 (GSVAVGKS) serves as a coordination point for ATP.

Belongs to the prokaryotic pantothenate kinase family.

It localises to the cytoplasm. It catalyses the reaction (R)-pantothenate + ATP = (R)-4'-phosphopantothenate + ADP + H(+). It participates in cofactor biosynthesis; coenzyme A biosynthesis; CoA from (R)-pantothenate: step 1/5. The protein is Pantothenate kinase of Rhodococcus jostii (strain RHA1).